The following is a 63-amino-acid chain: Overexpressed in colon carcinoma 1 protein homolog (63 aa).

The segment covering 1-12 has biased composition (low complexity); it reads MGCGNSTAASAG. Residues 1-40 form a disordered region; the sequence is MGCGNSTAASAGAGQGPAGAAKDVTEESITEDDKRRNYGG.

Belongs to the OCC1 family.

This Bos taurus (Bovine) protein is Overexpressed in colon carcinoma 1 protein homolog.